Consider the following 101-residue polypeptide: Chaperone modulatory protein CbpM (101 aa).

This sequence belongs to the CbpM family.

Functionally, interacts with CbpA and inhibits both the DnaJ-like co-chaperone activity and the DNA binding activity of CbpA. Together with CbpA, modulates the activity of the DnaK chaperone system. Does not inhibit the co-chaperone activity of DnaJ. The sequence is that of Chaperone modulatory protein CbpM from Escherichia coli O1:K1 / APEC.